The sequence spans 353 residues: Ferredoxin--NADP reductase 1 (353 aa).

7 residues coordinate FAD: Asp43, Gln51, Tyr56, Ala96, Phe135, Asp300, and Ser341.

Belongs to the ferredoxin--NADP reductase type 2 family. In terms of assembly, homodimer. Requires FAD as cofactor.

It catalyses the reaction 2 reduced [2Fe-2S]-[ferredoxin] + NADP(+) + H(+) = 2 oxidized [2Fe-2S]-[ferredoxin] + NADPH. The polypeptide is Ferredoxin--NADP reductase 1 (Cupriavidus metallidurans (strain ATCC 43123 / DSM 2839 / NBRC 102507 / CH34) (Ralstonia metallidurans)).